A 445-amino-acid polypeptide reads, in one-letter code: Phosphoglucosamine mutase (445 aa).

Catalysis depends on Ser-102, which acts as the Phosphoserine intermediate. Mg(2+) contacts are provided by Ser-102, Asp-241, Asp-243, and Asp-245. Residue Ser-102 is modified to Phosphoserine.

It belongs to the phosphohexose mutase family. Requires Mg(2+) as cofactor. Post-translationally, activated by phosphorylation.

The enzyme catalyses alpha-D-glucosamine 1-phosphate = D-glucosamine 6-phosphate. In terms of biological role, catalyzes the conversion of glucosamine-6-phosphate to glucosamine-1-phosphate. This Aliivibrio fischeri (strain ATCC 700601 / ES114) (Vibrio fischeri) protein is Phosphoglucosamine mutase.